A 138-amino-acid chain; its full sequence is Sec-independent protein translocase protein TatB (138 aa).

The helical transmembrane segment at 2–18 (SFGEIIVILVVAILVLG) threads the bilayer. Residues 109–138 (NNLSGQNLNTEEKPNLSKLETQDKNGKINV) form a disordered region. Residues 118-138 (TEEKPNLSKLETQDKNGKINV) are compositionally biased toward basic and acidic residues.

This sequence belongs to the TatB family. The Tat system comprises two distinct complexes: a TatABC complex, containing multiple copies of TatA, TatB and TatC subunits, and a separate TatA complex, containing only TatA subunits. Substrates initially bind to the TatABC complex, which probably triggers association of the separate TatA complex to form the active translocon.

The protein localises to the cell inner membrane. Functionally, part of the twin-arginine translocation (Tat) system that transports large folded proteins containing a characteristic twin-arginine motif in their signal peptide across membranes. Together with TatC, TatB is part of a receptor directly interacting with Tat signal peptides. TatB may form an oligomeric binding site that transiently accommodates folded Tat precursor proteins before their translocation. The chain is Sec-independent protein translocase protein TatB from Campylobacter jejuni subsp. jejuni serotype O:2 (strain ATCC 700819 / NCTC 11168).